A 174-amino-acid chain; its full sequence is Large ribosomal subunit protein uL10 (174 aa).

This sequence belongs to the universal ribosomal protein uL10 family. In terms of assembly, part of the ribosomal stalk of the 50S ribosomal subunit. The N-terminus interacts with L11 and the large rRNA to form the base of the stalk. The C-terminus forms an elongated spine to which L12 dimers bind in a sequential fashion forming a multimeric L10(L12)X complex.

Its function is as follows. Forms part of the ribosomal stalk, playing a central role in the interaction of the ribosome with GTP-bound translation factors. The sequence is that of Large ribosomal subunit protein uL10 from Methylobacillus flagellatus (strain ATCC 51484 / DSM 6875 / VKM B-1610 / KT).